The following is a 425-amino-acid chain: MNVLLLGSGGREHALAWKIAASPLLTKLYAAPGNPGIGAEAELVKLDITDHAAVTAFCQEKKIDLVVVGPEGPLVAGIADDLRAENIRVFGPSKAAARLEGSKGFTKDLCARYNIPTAAYGRFNDLASAKAYVDQTGAPIVIKADGLAAGKGVTVAMTSDEARAALDACFEGSFGAAGAEVVVEEFMTGEEASFFCLCDGTTALPFGTAQDHKRVGDGDVGPNTGGMGAYSPAPVMTPEMIERTMREIIEPTMRGMAELGAPFAGILFAGLMITDKGPKLIEYNTRFGDPECQVLMMRLKDDLLVLLNAAVDGQLAHTSIRWRDEAALTVVMAARGYPGTPEKGSVIRGVEQAAGEGVQIFHAGTAINGGALVANGGRVLNVTASGATVGEAQKRAYAALDRIDWPDGFCRRDIGWQAVARERAS.

The region spanning 107-312 is the ATP-grasp domain; the sequence is KDLCARYNIP…LLVLLNAAVD (206 aa). 133 to 193 lines the ATP pocket; sequence VDQTGAPIVI…EEFMTGEEAS (61 aa). The segment at 214-233 is disordered; the sequence is RVGDGDVGPNTGGMGAYSPA. Residues Glu-282 and Asn-284 each contribute to the Mg(2+) site.

This sequence belongs to the GARS family. Mg(2+) is required as a cofactor. Mn(2+) serves as cofactor.

It carries out the reaction 5-phospho-beta-D-ribosylamine + glycine + ATP = N(1)-(5-phospho-beta-D-ribosyl)glycinamide + ADP + phosphate + H(+). It participates in purine metabolism; IMP biosynthesis via de novo pathway; N(1)-(5-phospho-D-ribosyl)glycinamide from 5-phospho-alpha-D-ribose 1-diphosphate: step 2/2. The polypeptide is Phosphoribosylamine--glycine ligase (Mesorhizobium japonicum (strain LMG 29417 / CECT 9101 / MAFF 303099) (Mesorhizobium loti (strain MAFF 303099))).